The following is a 276-amino-acid chain: MRQLQKQIIEDLKVIPTIDPQVEVRRRIDFLKDYLKQTKMATLVLGISGGQDSALAGRLAQLAVEELRKESGSEDYQFIAVRLPYGEQADESDAMMAIDDFIHPDRVVKVNIKPATDAMVMTLEAAGTKISDFNKGNIKARERMIVQYAIAGEYHGAVVGTDHAAEAVTGFYTKYGDGGADVTPLSQLDKRQGRALLEYLGAPEKLYQKTPTADLEEDRPALPDEQALGVTYKDIDDFLEGREVDQAAAEKIEAWYQRTGHKRHMPVAPLDTWWKD.

Residue 46–53 (GISGGQDS) coordinates ATP. Position 52 (aspartate 52) interacts with Mg(2+). Arginine 141 provides a ligand contact to deamido-NAD(+). Threonine 161 is an ATP binding site. Glutamate 166 contacts Mg(2+). The deamido-NAD(+) site is built by lysine 174 and aspartate 181. Lysine 190 and threonine 212 together coordinate ATP. 261–262 (HK) serves as a coordination point for deamido-NAD(+).

It belongs to the NAD synthetase family. As to quaternary structure, homodimer.

It carries out the reaction deamido-NAD(+) + NH4(+) + ATP = AMP + diphosphate + NAD(+) + H(+). It functions in the pathway cofactor biosynthesis; NAD(+) biosynthesis; NAD(+) from deamido-NAD(+) (ammonia route): step 1/1. Its function is as follows. Catalyzes the ATP-dependent amidation of deamido-NAD to form NAD. Uses ammonia as a nitrogen source. In Limosilactobacillus fermentum (strain NBRC 3956 / LMG 18251) (Lactobacillus fermentum), this protein is NH(3)-dependent NAD(+) synthetase.